Here is a 743-residue protein sequence, read N- to C-terminus: MASNYYSVQIKQCIGLGARNQSRYVKMIHGNIIRALPYPETFLYNNIVHAYALMKSSTYARRVFDRIPQPNLFSWNNLLLAYSKAGLISEMESTFEKLPDRDGVTWNVLIEGYSLSGLVGAAVKAYNTMMRDFSANLTRVTLMTMLKLSSSNGHVSLGKQIHGQVIKLGFESYLLVGSPLLYMYANVGCISDAKKVFYGLDDRNTVMYNSLMGGLLACGMIEDALQLFRGMEKDSVSWAAMIKGLAQNGLAKEAIECFREMKVQGLKMDQYPFGSVLPACGGLGAINEGKQIHACIIRTNFQDHIYVGSALIDMYCKCKCLHYAKTVFDRMKQKNVVSWTAMVVGYGQTGRAEEAVKIFLDMQRSGIDPDHYTLGQAISACANVSSLEEGSQFHGKAITSGLIHYVTVSNSLVTLYGKCGDIDDSTRLFNEMNVRDAVSWTAMVSAYAQFGRAVETIQLFDKMVQHGLKPDGVTLTGVISACSRAGLVEKGQRYFKLMTSEYGIVPSIGHYSCMIDLFSRSGRLEEAMRFINGMPFPPDAIGWTTLLSACRNKGNLEIGKWAAESLIELDPHHPAGYTLLSSIYASKGKWDSVAQLRRGMREKNVKKEPGQSWIKWKGKLHSFSADDESSPYLDQIYAKLEELNNKIIDNGYKPDTSFVHHDVEEAVKVKMLNYHSERLAIAFGLIFVPSGQPIRVGKNLRVCVDCHNATKHISSVTGREILVRDAVRFHRFKDGTCSCGDFW.

PPR repeat units follow at residues 40 to 70, 71 to 101, 102 to 132, 138 to 172, 173 to 203, 204 to 233, 234 to 268, 269 to 303, 304 to 334, 335 to 369, 370 to 404, 405 to 435, 436 to 470, 471 to 506, and 507 to 537; these read ETFL…IPQP, NLFS…LPDR, DGVT…MMRD, TRVT…GFES, YLLV…LDDR, NTVM…GMEK, DSVS…GLKM, DQYP…NFQD, HIYV…MKQK, NVVS…GIDP, DHYT…GLIH, YVTV…MNVR, DAVS…GLKP, DGVT…GIVP, and SIGH…MPFP. Positions 542-617 are type E motif; that stretch reads GWTTLLSACR…EPGQSWIKWK (76 aa). Residues 618–648 are type E(+) motif; it reads GKLHSFSADDESSPYLDQIYAKLEELNNKII. Residues 649–743 are type DYW motif; the sequence is DNGYKPDTSF…DGTCSCGDFW (95 aa).

This sequence belongs to the PPR family. PCMP-H subfamily.

The protein is Putative pentatricopeptide repeat-containing protein At1g68930 (PCMP-H22) of Arabidopsis thaliana (Mouse-ear cress).